A 344-amino-acid chain; its full sequence is Phosphate acyltransferase (344 aa).

Belongs to the PlsX family. As to quaternary structure, homodimer. Probably interacts with PlsY.

Its subcellular location is the cytoplasm. The catalysed reaction is a fatty acyl-[ACP] + phosphate = an acyl phosphate + holo-[ACP]. It functions in the pathway lipid metabolism; phospholipid metabolism. Catalyzes the reversible formation of acyl-phosphate (acyl-PO(4)) from acyl-[acyl-carrier-protein] (acyl-ACP). This enzyme utilizes acyl-ACP as fatty acyl donor, but not acyl-CoA. This Yersinia enterocolitica serotype O:8 / biotype 1B (strain NCTC 13174 / 8081) protein is Phosphate acyltransferase.